The primary structure comprises 730 residues: Dynein axonemal intermediate chain 7 (730 aa).

Residues 1–14 are compositionally biased toward basic residues; the sequence is MAPKSKKAPSKKKM. Residues 1–20 form a disordered region; the sequence is MAPKSKKAPSKKKMTKAERL.

It belongs to the DNAI7 family. Part of the multisubunit axonemal dynein complex formed at least of two heavy chains and a number of intermediate and light chains. Interacts with tubulin. Associates with microtubule. In terms of processing, ubiquitinated. Ubiquitination leads to its degradation through the 26S proteasome. Ubiquitin-proteasome-mediated DNAI7 degradation occurs in mitosis. As to expression, high expressed in lung, kidney, and testis.

Its subcellular location is the cell projection. It localises to the cilium. The protein localises to the cytoplasm. Via its association with the multisubunit axonemal dynein complex, is potentially involved in the regulation of cilia function. May also act as a cell cycle regulator. In Mus musculus (Mouse), this protein is Dynein axonemal intermediate chain 7 (Dnai7).